The sequence spans 242 residues: Protein HTATIP2 (242 aa).

The residue at position 2 (alanine 2) is an N-acetylalanine. A required for interaction with elongation factor EEF1A1 region spans residues 2 to 25 (AETEALSKLREDFRMQNKSVFILG). 12 residues coordinate NADPH: serine 27, glycine 28, glutamate 29, threonine 30, arginine 52, arginine 53, leucine 92, glycine 93, tyrosine 143, lysine 147, leucine 170, and arginine 178. The active-site Proton acceptor is tyrosine 143. The active site involves lysine 147.

In terms of assembly, monomer. Forms homodimers during oxidative stress. Interacts (via N-terminus) with elongation factor EEF1A1 (via middle-region); the interaction is direct and competes with EEF1A1 binding to guanyl-nucleotide exchange factor EEF1B2, thereby inhibiting GDP for GTP exchange and reactivation of EEF1A1. Interacts with nuclear transport receptors XPO4, IPO5/RANBP5, IPO7, IPO9 and KPNB1 as well as GCN1L1/GCN1 and LRPPRC probably through their HEAT repeats. Binds NCOA5/CIA.

It localises to the cytoplasm. Its function is as follows. Represses translation by preventing reactivation of elongation factor eEF1A. May also inhibit nuclear import by competing with nuclear import substrates for binding to a subset of nuclear transport receptors. Has additionally been proposed to act as a redox sensor involved in cellular oxidative stress surveillance. The protein is Protein HTATIP2 (HTATIP2) of Pongo pygmaeus (Bornean orangutan).